Consider the following 409-residue polypeptide: MRSPPREARLRMAVEAIGKNKNLSIRAAARQYNVPEATIRHRCTGRSARRDLPANSRKLTDLEERTIVQYILELDARAFPPRLRGVEDMANHLLRERDAPPVGKLWAHNFVKRQPQLRTRRTRRYDYQRAKCEDPKVIGEWFTLVQDAKAKYGIVDDDVYNFDETGLMMGIIFAGQAYGRLIDELMRAHINHITKLEFLCAFREAFFASMTEKNIQGGFSGAGIVPFDPERVLSKLDVKLHTPTHPDSRPGTAQPWASKTPYNAQETRSQSDFIKTRISSYQNSSPASVLVAVDQLTKGATAVMHQVALLQSEVSSLRKANEPLSKRRKAKRTRIQLGGPLTVQDAQDPLDQRDVGKGALQETQPDSSGAGGARAKVRRCNSCCKVGESASLAYMRRSLIIYVRSYNDF.

One can recognise an HTH CENPB-type domain in the interval 51–120; the sequence is DLPANSRKLT…VKRQPQLRTR (70 aa). The H-T-H motif DNA-binding region spans 84 to 113; that stretch reads RGVEDMANHLLRERDAPPVGKLWAHNFVKR. 2 disordered regions span residues 243-269 and 320-350; these read PTHP…ETRS and ANEP…QDPL. Over residues 255–269 the composition is skewed to polar residues; sequence PWASKTPYNAQETRS.

The protein localises to the nucleus. Part of the gene cluster that mediates the biosynthesis of chaetoglobosin A which has a unique inhibitory activity against actin polymerization in mammalian cells. Chaetoglobosin A and its intermediates are involved in the morphological differentiation of C.globosum. The first step of the pathway is the synthesis of prochaetoglobosin I via condensation of one acetyl-CoA, 8 malonyl-CoA, and a L-tryptophan molecule by the PKS-NRPS hybrid synthetase cheA, followed by reduction of backbone double bond to install desired geometry by the enoyl reductase cheB. Further multiple oxidation steps performed by the cytochrome P450 monooxygenases cheE and cheG, as well as by the FAD-linked oxidoreductase cheF, lead to the formation of chaetoglobosin A. Depending on the order of action of these reductases, distinct intermediates can be identified. Within the pathway, the cytochrome P450 monooxygenase cheE catalyzes a stereospecific epoxidation on prochaetoglobosin I, cytoglobosin D, and chaetoglobosin J intermediates. The FAD-linked oxidoreductase cheF performs dehydrogenation of the C-20 hydroxyl groups in the 20-dihyrochaetoglobosin A and cytoglobosin D intermediates. Finally, the cytochrome P450 monooxygenase cheG can catalyze the stereospecific dihydroxylation of prochaetoglobosin I and prochaetoglobosin IV at C-19 and C-20, respectively. The Diels-Alderase cheD may play a role in the post-PKS-NRPS biosynthetic steps catalyzing Diels-Alder cyclization. This Chaetomium globosum (strain ATCC 6205 / CBS 148.51 / DSM 1962 / NBRC 6347 / NRRL 1970) (Soil fungus) protein is Chaetoglobosin A biosynthesis cluster protein C.